The following is a 77-amino-acid chain: MANIKSAIKRAELNKVANERNAQQKSAMRTLIKKFEAAPTEELYRAASSSIDKAASKGLIHANKASRDKARLAAKLG.

Belongs to the bacterial ribosomal protein bS20 family.

In terms of biological role, binds directly to 16S ribosomal RNA. The sequence is that of Small ribosomal subunit protein bS20 from Lactococcus lactis subsp. lactis (strain IL1403) (Streptococcus lactis).